A 233-amino-acid chain; its full sequence is Opacity protein opA67 (233 aa).

A signal peptide is located at residue alanine 1.

It belongs to the opacity porin family.

It is found in the cell outer membrane. Functionally, implicated in a number of adherence functions. OPA proteins are implicated in pathogenesis and are subject to phase variation. In Neisseria gonorrhoeae, this protein is Opacity protein opA67.